We begin with the raw amino-acid sequence, 105 residues long: Small ribosomal subunit protein eS24 (105 aa).

This sequence belongs to the eukaryotic ribosomal protein eS24 family.

In Haloquadratum walsbyi (strain DSM 16790 / HBSQ001), this protein is Small ribosomal subunit protein eS24.